The following is a 186-amino-acid chain: Inner membrane-spanning protein YciB (186 aa).

6 helical membrane-spanning segments follow: residues 3-23 (FLFD…AGIY), 24-44 (VATT…WFKH), 49-69 (AMQW…LIFH), 76-96 (WKPT…AVLL), 121-141 (LVWS…AYHF), and 149-169 (FKLF…SVWL).

Belongs to the YciB family.

The protein localises to the cell inner membrane. Plays a role in cell envelope biogenesis, maintenance of cell envelope integrity and membrane homeostasis. In Ralstonia nicotianae (strain ATCC BAA-1114 / GMI1000) (Ralstonia solanacearum), this protein is Inner membrane-spanning protein YciB.